Reading from the N-terminus, the 359-residue chain is Dihydroorotate dehydrogenase (quinone) (359 aa).

FMN is bound by residues 68-72 (AGFDK) and threonine 92. Lysine 72 contacts substrate. 117–121 (NRMGF) provides a ligand contact to substrate. Positions 145 and 176 each coordinate FMN. Residue asparagine 176 participates in substrate binding. The active-site Nucleophile is serine 179. Asparagine 181 lines the substrate pocket. Residues lysine 212 and threonine 240 each coordinate FMN. 241-242 (NT) lines the substrate pocket. FMN-binding positions include glycine 266, glycine 295, and 316 to 317 (YT).

Belongs to the dihydroorotate dehydrogenase family. Type 2 subfamily. As to quaternary structure, monomer. FMN serves as cofactor.

Its subcellular location is the cell membrane. The catalysed reaction is (S)-dihydroorotate + a quinone = orotate + a quinol. It participates in pyrimidine metabolism; UMP biosynthesis via de novo pathway; orotate from (S)-dihydroorotate (quinone route): step 1/1. Catalyzes the conversion of dihydroorotate to orotate with quinone as electron acceptor. This is Dihydroorotate dehydrogenase (quinone) from Corynebacterium striatum.